The primary structure comprises 348 residues: Ion-translocating oxidoreductase complex subunit D (348 aa).

Transmembrane regions (helical) follow at residues 20-39 (VMRL…CYLF), 67-87 (YVVS…LIAV), and 124-144 (AMVG…NWMA). Thr-187 is subject to FMN phosphoryl threonine. The next 4 membrane-spanning stretches (helical) occupy residues 221-241 (WINL…LIPW), 244-264 (PVAM…LAPA), 266-286 (FAMP…FFII), and 300-320 (LVFG…GGYP).

It belongs to the NqrB/RnfD family. As to quaternary structure, the complex is composed of six subunits: RnfA, RnfB, RnfC, RnfD, RnfE and RnfG. Requires FMN as cofactor.

Its subcellular location is the cell inner membrane. Functionally, part of a membrane-bound complex that couples electron transfer with translocation of ions across the membrane. The sequence is that of Ion-translocating oxidoreductase complex subunit D from Tolumonas auensis (strain DSM 9187 / NBRC 110442 / TA 4).